A 1004-amino-acid chain; its full sequence is Outer cell wall protein (1004 aa).

Positions 1-24 (MNKKVVLSVLSTTLVASVAASAFA) are cleaved as a signal peptide.

In terms of assembly, the outer cell wall layer is composed of subunits of the outer cell wall protein. These proteins form a hexagonal array with a lattice constant of 14.5 nm in the outer cell wall layers.

The protein localises to the secreted. It localises to the cell wall. It is found in the S-layer. In terms of biological role, the outer wall protein binds to the middle cell wall protein. This is Outer cell wall protein from Brevibacillus brevis (strain 47 / JCM 6285 / NBRC 100599).